Here is a 266-residue protein sequence, read N- to C-terminus: MAKSLFRALVALSFLAPLWLNAAPRVITLSPANTELAFAAGITPVGVSSYSDYPLQAQKIEQVSTWQGMNLERIVALKPDLVIAWRGGNAERQVDQLASLGIKVMWVDATSIEQIANALRQLAPWSPQPDKAEQAAQSLLDQYAQLKAQYADKPKKRVFLQFGINPPFTSGKESIQNQVLEVCGGENIFKDSRVPWPQVSREQVLARSPQAIVITGGPDQIPKIKQYWGEQLKIPVIPLTSDWFERASPRIILAAQQLCNALSQVD.

The signal sequence occupies residues 1-22 (MAKSLFRALVALSFLAPLWLNA). A Fe/B12 periplasmic-binding domain is found at 25-266 (RVITLSPANT…QLCNALSQVD (242 aa)). Cyanocob(III)alamin contacts are provided by residues Y50 and 242–246 (DWFER). An intrachain disulfide couples C183 to C259.

This sequence belongs to the BtuF family. As to quaternary structure, the complex is composed of two ATP-binding proteins (BtuD), two transmembrane proteins (BtuC) and a solute-binding protein (BtuF).

It localises to the periplasm. Part of the ABC transporter complex BtuCDF involved in vitamin B12 import. Binds vitamin B12 and delivers it to the periplasmic surface of BtuC. The chain is Vitamin B12-binding protein from Escherichia coli O6:H1 (strain CFT073 / ATCC 700928 / UPEC).